The sequence spans 421 residues: Osmoprotective compounds-binding protein GgtB (421 aa).

A signal peptide spans 1-18 (MKFFKITTLIISLIVLTS). The N-palmitoyl cysteine moiety is linked to residue cysteine 19. Cysteine 19 is lipidated: S-diacylglycerol cysteine.

Belongs to the bacterial solute-binding protein 1 family. In terms of assembly, the complex is composed of two ATP-binding proteins (GgtA), two transmembrane proteins (GgtC and GgtD) and a solute-binding protein (GgtB).

It is found in the cell membrane. Part of the ABC transporter complex GgtABCD involved in the uptake of the osmoprotective compounds glucosylglycerol (GG), sucrose and trehalose. Binds glucosylglycerol and exhibits a somewhat lower affinity towards sucrose and a substantially lower affinity towards trehalose. This Synechocystis sp. (strain ATCC 27184 / PCC 6803 / Kazusa) protein is Osmoprotective compounds-binding protein GgtB.